The chain runs to 300 residues: Glycine--tRNA ligase alpha subunit (300 aa).

The protein belongs to the class-II aminoacyl-tRNA synthetase family. As to quaternary structure, tetramer of two alpha and two beta subunits.

It is found in the cytoplasm. It carries out the reaction tRNA(Gly) + glycine + ATP = glycyl-tRNA(Gly) + AMP + diphosphate. This chain is Glycine--tRNA ligase alpha subunit (glyQ), found in Buchnera aphidicola subsp. Baizongia pistaciae (strain Bp).